The chain runs to 110 residues: Large ribosomal subunit protein uL22 (110 aa).

This sequence belongs to the universal ribosomal protein uL22 family. Part of the 50S ribosomal subunit.

Functionally, this protein binds specifically to 23S rRNA; its binding is stimulated by other ribosomal proteins, e.g. L4, L17, and L20. It is important during the early stages of 50S assembly. It makes multiple contacts with different domains of the 23S rRNA in the assembled 50S subunit and ribosome. The globular domain of the protein is located near the polypeptide exit tunnel on the outside of the subunit, while an extended beta-hairpin is found that lines the wall of the exit tunnel in the center of the 70S ribosome. The chain is Large ribosomal subunit protein uL22 from Maridesulfovibrio salexigens (strain ATCC 14822 / DSM 2638 / NCIMB 8403 / VKM B-1763) (Desulfovibrio salexigens).